Reading from the N-terminus, the 132-residue chain is Small ribosomal subunit protein uS8 (132 aa).

The protein belongs to the universal ribosomal protein uS8 family. Part of the 30S ribosomal subunit. Contacts proteins S5 and S12.

Its function is as follows. One of the primary rRNA binding proteins, it binds directly to 16S rRNA central domain where it helps coordinate assembly of the platform of the 30S subunit. This chain is Small ribosomal subunit protein uS8, found in Clavibacter michiganensis subsp. michiganensis (strain NCPPB 382).